A 199-amino-acid chain; its full sequence is Pyridoxal 5'-phosphate synthase subunit PdxT (199 aa).

47–49 contacts L-glutamine; that stretch reads GES. Cysteine 79 serves as the catalytic Nucleophile. L-glutamine is bound by residues arginine 106 and 133–134; that span reads IR. Active-site charge relay system residues include histidine 169 and glutamate 171.

This sequence belongs to the glutaminase PdxT/SNO family. As to quaternary structure, in the presence of PdxS, forms a dodecamer of heterodimers. Only shows activity in the heterodimer.

The enzyme catalyses aldehydo-D-ribose 5-phosphate + D-glyceraldehyde 3-phosphate + L-glutamine = pyridoxal 5'-phosphate + L-glutamate + phosphate + 3 H2O + H(+). The catalysed reaction is L-glutamine + H2O = L-glutamate + NH4(+). It participates in cofactor biosynthesis; pyridoxal 5'-phosphate biosynthesis. In terms of biological role, catalyzes the hydrolysis of glutamine to glutamate and ammonia as part of the biosynthesis of pyridoxal 5'-phosphate. The resulting ammonia molecule is channeled to the active site of PdxS. The sequence is that of Pyridoxal 5'-phosphate synthase subunit PdxT from Desulfitobacterium hafniense (strain DSM 10664 / DCB-2).